Reading from the N-terminus, the 518-residue chain is GMP synthase [glutamine-hydrolyzing] (518 aa).

One can recognise a Glutamine amidotransferase type-1 domain in the interval 13–203 (KIIVLDFGSQ…ALNVCGCKGD (191 aa)). Cys90 (nucleophile) is an active-site residue. Residues His177 and Glu179 contribute to the active site. Positions 204–393 (WTMENFSEVE…LGMPDAIVWR (190 aa)) constitute a GMPS ATP-PPase domain. Residue 231–237 (SGGVDSS) coordinates ATP.

As to quaternary structure, homodimer.

The catalysed reaction is XMP + L-glutamine + ATP + H2O = GMP + L-glutamate + AMP + diphosphate + 2 H(+). Its pathway is purine metabolism; GMP biosynthesis; GMP from XMP (L-Gln route): step 1/1. Functionally, catalyzes the synthesis of GMP from XMP. This Listeria welshimeri serovar 6b (strain ATCC 35897 / DSM 20650 / CCUG 15529 / CIP 8149 / NCTC 11857 / SLCC 5334 / V8) protein is GMP synthase [glutamine-hydrolyzing].